We begin with the raw amino-acid sequence, 846 residues long: MAVKRLIETFVPENYKIFLDIDRKTKKIKGQVAITGEAKDTVVSFHTKGLHFNKVRAFSVDTNFIENEEDEEIVVKIGETGRVTVSFEYEAELTDNMMGIYPSYYEVNGEKKMLIGTQFESHFARQAFPSIDEPEAKATFDLSVKFDEEEGDIIVSNMPELLNINGIHVFERTVKMSSYLLAFVFGELQYKKGKTKSGVEVGAFATKAHSQAALDFPLDIAIRSIEFYEDYYQTPYPLPHSWHIALPDFSAGAMENWGCITYREVCMLVDPENATIQSKQYVATVIAHELAHQWFGDLVTMQWWDDLWLNESFANNMEYVCMDALEPSWNVWESFSISEANMALNRDATDGVQSVHVEVTHPDEIGTLFDPAIVYAKGSRLMVMLRKWLGDEDFAAGLALYFKRHQYGNTVGDNLWDALAEVSGKDVAAFMHSWVNQPGYPVVTAEVVDDTLILSQKQFFVGEGVDKGRLWNVPLNTNWTGLPDLLSSEKVEIPGFAALKTKNNGKALFLNDANMAHYIIDYKGALLTDLLSEVESLENVTKFQILQDRKLLAKAGVISYADVVNILPSFTNEESYLVNTGLSQLISELELFVDEDSETEKAFQSLVGKLFAKNYARLGWDKVAGESAGDESLRGIVLSKTLYSENADAKTKASQIFAAHKENLASIPADIRPIVLNNEIKTTNSAELVKTYRETYIKTSLQEFKRELEGAVALIKDEKVIAELLESFKNADIVKPQDIAFSWFYLLRNDFSQDAAWAWEKANWAFLEEKLGGDMSYDKFVIYPGNTFKTADKLAEYKAFFEPKLENQGLKRSIEMAIKQITARVALIDSQKAAVDKAITDIAEKL.

Substrate is bound by residues E120 and 252–256; that span reads GAMEN. Zn(2+) is bound at residue H288. Residue E289 is the Proton acceptor of the active site. Residues H292 and E311 each contribute to the Zn(2+) site.

The protein belongs to the peptidase M1 family. Monomer. The cofactor is Zn(2+).

It localises to the cytoplasm. The enzyme catalyses Release of an N-terminal amino acid, Xaa-|-Yaa- from a peptide, amide or arylamide. Xaa is preferably Ala, but may be most amino acids including Pro (slow action). When a terminal hydrophobic residue is followed by a prolyl residue, the two may be released as an intact Xaa-Pro dipeptide.. Functionally, aminopeptidase with broad substrate specificity to several peptides. It has more affinity for oligopeptides than for dipeptides. It plays an essential role in the metabolism, it may be involved in nitrogen supply or protein turnover. The polypeptide is Aminopeptidase N (pepN) (Lactococcus lactis subsp. cremoris (strain MG1363)).